The following is a 126-amino-acid chain: Aspartate 1-decarboxylase (126 aa).

Ser-25 acts as the Schiff-base intermediate with substrate; via pyruvic acid in catalysis. Residue Ser-25 is modified to Pyruvic acid (Ser). Thr-57 is a substrate binding site. Tyr-58 (proton donor) is an active-site residue. Substrate is bound at residue 73-75; the sequence is GAA.

It belongs to the PanD family. As to quaternary structure, heterooctamer of four alpha and four beta subunits. Requires pyruvate as cofactor. Post-translationally, is synthesized initially as an inactive proenzyme, which is activated by self-cleavage at a specific serine bond to produce a beta-subunit with a hydroxyl group at its C-terminus and an alpha-subunit with a pyruvoyl group at its N-terminus.

It is found in the cytoplasm. It catalyses the reaction L-aspartate + H(+) = beta-alanine + CO2. It participates in cofactor biosynthesis; (R)-pantothenate biosynthesis; beta-alanine from L-aspartate: step 1/1. Catalyzes the pyruvoyl-dependent decarboxylation of aspartate to produce beta-alanine. The polypeptide is Aspartate 1-decarboxylase (Methylococcus capsulatus (strain ATCC 33009 / NCIMB 11132 / Bath)).